We begin with the raw amino-acid sequence, 207 residues long: Reticulon-1-A (207 aa).

The 187-residue stretch at 21–207 (AIDLLYWRDI…AKIPGTKQKE (187 aa)) folds into the Reticulon domain. 2 helical membrane passes run 35 to 55 (IVFG…VVSV) and 139 to 159 (VLMW…LLIM).

As to expression, expressed in the animal hemisphere (presumptive neural ectoderm) of blastula and gastrula stage embryos, and along the anterior neural border, in the panplacodal primordium, and in the dorsolateral side of archenteron roof of late neurula embryos. At the tailbud stage, expression localizes to the central nervous system, including the spinal cord, prosencephalon, mesencephalon and rhombencephalon, as well as the lateral line placode, otic vesicle and pronephros.

The protein localises to the endoplasmic reticulum membrane. It localises to the nucleus. Its function is as follows. Inhibits amyloid precursor protein processing, probably by blocking BACE1 activity. The polypeptide is Reticulon-1-A (rtn1-a) (Xenopus laevis (African clawed frog)).